The primary structure comprises 958 residues: Unconventional myosin-Ih (958 aa).

Residues 12–691 (GVQDFVLLDA…TLFATEDAFE (680 aa)) form the Myosin motor domain. 105–112 (GESGAGKT) is an ATP binding site. S365 bears the Phosphoserine mark. An actin-binding region spans residues 568-590 (LSSLLEILISKEPSYIRCIKPNE). IQ domains are found at residues 694 to 716 (KHQLVSRIQATYKGCLGRREYMK) and 717 to 746 (KRQAATKLEAHWRGVLARKEIKRRRWAVQI). A TH1 domain is found at 773–955 (RKNYILNLRY…NGQLRVVSAG (183 aa)).

It belongs to the TRAFAC class myosin-kinesin ATPase superfamily. Myosin family. As to expression, highly expressed in the central nervous system, including the forebrain, midbrain and lower medulla. In the lower medulla, it is broadly expressed throughout the reticular formation. It is expressed in the retrotrapezoid nucleus and the nucleus of the solitary tract, as well as motor neurons of the facial, vagal and ambiguus nuclei. Expressed in neonatal inner-ear organs.

Functionally, myosins are actin-based motor molecules with ATPase activity. Unconventional myosins serve in intracellular movements. Their highly divergent tails are presumed to bind to membranous compartments, which would be moved relative to actin filaments. This Mus musculus (Mouse) protein is Unconventional myosin-Ih (Myo1h).